The sequence spans 242 residues: Small ribosomal subunit protein uS2 (242 aa).

The protein belongs to the universal ribosomal protein uS2 family.

This chain is Small ribosomal subunit protein uS2, found in Aliivibrio fischeri (strain ATCC 700601 / ES114) (Vibrio fischeri).